The chain runs to 692 residues: Follicle-stimulating hormone receptor (692 aa).

An N-terminal signal peptide occupies residues methionine 1–glycine 17. Intrachain disulfides connect cysteine 18/cysteine 25 and cysteine 23/cysteine 32. One can recognise an LRRNT domain in the interval cysteine 18–arginine 46. Topologically, residues cysteine 18–arginine 365 are extracellular. LRR repeat units lie at residues isoleucine 49–leucine 72, glutamate 73–leucine 97, histidine 98–asparagine 118, leucine 119–serine 143, leucine 144–serine 169, phenylalanine 170–glycine 192, threonine 193–glycine 216, alanine 217–asparagine 240, and leucine 241–aspartate 259. 2 N-linked (GlcNAc...) asparagine glycosylation sites follow: asparagine 191 and asparagine 199. Disulfide bonds link cysteine 275/cysteine 345, cysteine 276/cysteine 292, cysteine 276/cysteine 355, and cysteine 292/cysteine 337. N-linked (GlcNAc...) asparagine glycosylation is present at asparagine 293. At tyrosine 334 the chain carries Sulfotyrosine. The chain crosses the membrane as a helical span at residues valine 366–leucine 386. Residues threonine 387–arginine 397 lie on the Cytoplasmic side of the membrane. The helical transmembrane segment at phenylalanine 398 to valine 420 threads the bilayer. Residues aspartate 421–aspartate 442 lie on the Extracellular side of the membrane. A disulfide bridge connects residues cysteine 441 and cysteine 516. A helical membrane pass occupies residues alanine 443–leucine 464. Residues glutamate 465–histidine 484 are Cytoplasmic-facing. The chain crosses the membrane as a helical span at residues alanine 485–isoleucine 507. Residues serine 508–glutamine 527 are Extracellular-facing. A helical membrane pass occupies residues leucine 528 to threonine 549. Topologically, residues histidine 550–arginine 572 are cytoplasmic. The helical transmembrane segment at methionine 573 to leucine 596 threads the bilayer. At lysine 597–lysine 607 the chain is on the extracellular side. A helical transmembrane segment spans residues isoleucine 608 to threonine 629. Residues lysine 630 to asparagine 692 are Cytoplasmic-facing.

Belongs to the G-protein coupled receptor 1 family. FSH/LSH/TSH subfamily. In terms of assembly, homotrimer. Functions as a homotrimer binding the FSH hormone heterodimer composed of CGA and FSHB. Interacts with ARRB2. Interacts with APPL2; interaction is independent of follicle stimulating hormone stimulation. In terms of processing, N-glycosylated; indirectly required for FSH-binding, possibly via a conformational change that allows high affinity binding of hormone. Post-translationally, sulfated.

It is found in the cell membrane. Its function is as follows. G protein-coupled receptor for follitropin, the follicle-stimulating hormone. Through cAMP production activates the downstream PI3K-AKT and ERK1/ERK2 signaling pathways. The protein is Follicle-stimulating hormone receptor (Fshr) of Mus musculus (Mouse).